Consider the following 1182-residue polypeptide: Tyrosine-protein kinase ABL2 (1182 aa).

Disordered regions lie at residues 1-47 (MGQQ…TGFN) and 60-80 (EDGF…HRPY). G2 carries the N-myristoyl glycine lipid modification. Residues 2–106 (GQQVGRVGEA…SKENLLGATE (105 aa)) are CAP. The segment covering 20-30 (RGIRGSSAARP) has biased composition (low complexity). S97 is subject to Phosphoserine. Positions 107 to 167 (SDPNLFVALY…PSNYITPVNS (61 aa)) constitute an SH3 domain. Residues Y116, Y161, Y174, Y185, Y218, and Y231 each carry the phosphotyrosine modification. The SH2 domain occupies 173 to 263 (WYHGPVSRSA…GLVTTLHYPA (91 aa)). A Phosphotyrosine; by ABL1 and autocatalysis modification is found at Y261. At Y272 the chain carries Phosphotyrosine; by autocatalysis. S275 carries the post-translational modification Phosphoserine. The 252-residue stretch at 288-539 (ITMKHKLGGG…PSFAETHQAF (252 aa)) folds into the Protein kinase domain. 294-302 (LGGGQYGEV) contacts ATP. Phosphotyrosine is present on residues Y299 and Y303. Residues K317 and 362–368 (EYMPYGN) contribute to the ATP site. Residue D409 is the Proton acceptor of the active site. Positions 427–451 (DFGLSRLMTGDTYTAHAGAKFPIKW) match the Kinase activation loop motif. Residue Y439 is modified to Phosphotyrosine; by autocatalysis and SRC-type Tyr-kinases. Y459 is modified (phosphotyrosine). Y568 is subject to Phosphotyrosine; by autocatalysis. The segment at 611–641 (IRGAQASSGSPALPRKQRDKSPSSLLEDAKE) is disordered. Phosphoserine occurs at positions 620, 631, and 633. D647 is modified (phosphotyrosine). Residues 654–674 (SSFMKKRNAPTPPKRSSSFRE) form a disordered region. At S655 the chain carries Phosphoserine. The short motif at 658 to 660 (KKR) is the Nuclear localization signal element. Phosphotyrosine is present on residues A662 and R668. Phosphoserine is present on residues S669, S670, and S671. Phosphotyrosine is present on residues Y683 and Y718. Position 683 is a phosphotyrosine; by autocatalysis (Y683). The F-actin-binding stretch occupies residues 694–930 (SLQHADGFSF…PVLPTTHNHK (237 aa)). The tract at residues 763 to 794 (LRAGKPTASDDTSKPFPRSNSTSSMSSGLPEQ) is disordered. At K776 the chain carries N6-acetyllysine. Positions 780–791 (RSNSTSSMSSGL) are enriched in polar residues. Residue S783 is modified to Phosphoserine. Residue T800 is modified to Phosphothreonine. A compositionally biased stretch (polar residues) spans 807 to 823 (RSKLQLERTVSTSSQPE). The tract at residues 807-851 (RSKLQLERTVSTSSQPEENVDRANDMLPKKSEESAAPSRERPKAK) is disordered. Residues S817 and S820 each carry the phosphoserine modification. Positions 825-849 (NVDRANDMLPKKSEESAAPSRERPK) are enriched in basic and acidic residues. Residues S915 and S936 each carry the phosphoserine modification. Positions 964–1024 (HQVTSSGDKD…TSETQEGGKK (61 aa)) are disordered. The segment covering 1010–1019 (TAGQSTSETQ) has biased composition (polar residues). Residues 1020–1182 (EGGKKAALGA…VQEISDVVQR (163 aa)) form an F-actin-binding region.

The protein belongs to the protein kinase superfamily. Tyr protein kinase family. ABL subfamily. As to quaternary structure, interacts with PSMA7. Interacts with CTTN. Found in a complex with ABL1, ABL2, CRK and UNC119; leading to the inhibition of CRK phosphorylation by ABL kinases. Mg(2+) is required as a cofactor. Mn(2+) serves as cofactor. In terms of processing, phosphorylated at Tyr-261 by ABL1 in response to oxidative stress. Phosphorylated by PDGFRB. Polyubiquitinated. Polyubiquitination of ABL2 leads to degradation. As to expression, widely expressed.

It is found in the cytoplasm. Its subcellular location is the cytoskeleton. The catalysed reaction is L-tyrosyl-[protein] + ATP = O-phospho-L-tyrosyl-[protein] + ADP + H(+). With respect to regulation, stabilized in the inactive form by an association between the SH3 domain and the SH2-TK linker region, interactions of the N-terminal cap, and contributions from an N-terminal myristoyl group and phospholipids. Activated by autophosphorylation as well as by SRC-family kinase-mediated phosphorylation. Activated by RIN1 binding to the SH2 and SH3 domains. Inhibited by imatinib mesylate (Gleevec) which is used for the treatment of chronic myeloid leukemia (CML). Phosphatidylinositol 4,5-bisphosphate (PIP2), a highly abundant phosphoinositide known to regulate cytoskeletal and membrane proteins, inhibits the tyrosine kinase activity. Non-receptor tyrosine-protein kinase that plays an ABL1-overlapping role in key processes linked to cell growth and survival such as cytoskeleton remodeling in response to extracellular stimuli, cell motility and adhesion and receptor endocytosis. Coordinates actin remodeling through tyrosine phosphorylation of proteins controlling cytoskeleton dynamics like MYH10 (involved in movement); CTTN (involved in signaling); or TUBA1 and TUBB (microtubule subunits). Binds directly F-actin and regulates actin cytoskeletal structure through its F-actin-bundling activity. Involved in the regulation of cell adhesion and motility through phosphorylation of key regulators of these processes such as CRK, CRKL, DOK1 or ARHGAP35. Adhesion-dependent phosphorylation of ARHGAP35 promotes its association with RASA1, resulting in recruitment of ARHGAP35 to the cell periphery where it inhibits RHO. Phosphorylates multiple receptor tyrosine kinases like PDGFRB and other substrates which are involved in endocytosis regulation such as RIN1. In brain, may regulate neurotransmission by phosphorylating proteins at the synapse. ABL2 also acts as a regulator of multiple pathological signaling cascades during infection. Pathogens can highjack ABL2 kinase signaling to reorganize the host actin cytoskeleton for multiple purposes, like facilitating intracellular movement and host cell exit. Finally, functions as its own regulator through autocatalytic activity as well as through phosphorylation of its inhibitor, ABI1. Positively regulates chemokine-mediated T-cell migration, polarization, and homing to lymph nodes and immune-challenged tissues, potentially via activation of NEDD9/HEF1 and RAP1. In Homo sapiens (Human), this protein is Tyrosine-protein kinase ABL2 (ABL2).